Reading from the N-terminus, the 206-residue chain is Urease accessory protein UreG (206 aa).

13–20 contacts GTP; the sequence is GPVGSGKT.

It belongs to the SIMIBI class G3E GTPase family. UreG subfamily. In terms of assembly, homodimer. UreD, UreF and UreG form a complex that acts as a GTP-hydrolysis-dependent molecular chaperone, activating the urease apoprotein by helping to assemble the nickel containing metallocenter of UreC. The UreE protein probably delivers the nickel.

The protein localises to the cytoplasm. Its function is as follows. Facilitates the functional incorporation of the urease nickel metallocenter. This process requires GTP hydrolysis, probably effectuated by UreG. The sequence is that of Urease accessory protein UreG from Haloquadratum walsbyi (strain DSM 16790 / HBSQ001).